A 188-amino-acid chain; its full sequence is UPF0301 protein XF_2228 (188 aa).

Belongs to the UPF0301 (AlgH) family.

The sequence is that of UPF0301 protein XF_2228 from Xylella fastidiosa (strain 9a5c).